The chain runs to 529 residues: T-complex protein 1 subunit delta (529 aa).

Belongs to the TCP-1 chaperonin family. Heterooligomeric complex of about 850 to 900 kDa that forms two stacked rings, 12 to 16 nm in diameter.

Its subcellular location is the cytoplasm. In terms of biological role, molecular chaperone; assists the folding of proteins upon ATP hydrolysis. Known to play a role, in vitro, in the folding of actin and tubulin. The protein is T-complex protein 1 subunit delta (CCT4) of Candida glabrata (strain ATCC 2001 / BCRC 20586 / JCM 3761 / NBRC 0622 / NRRL Y-65 / CBS 138) (Yeast).